Here is a 644-residue protein sequence, read N- to C-terminus: Pentatricopeptide repeat-containing protein At1g12775, mitochondrial (644 aa).

Residues 1-53 (MVRMMIRRLSSQASRFVQPRLLETGTLRIALINCPNELLFCCERGFSTFSDRN) constitute a mitochondrion transit peptide. 15 PPR repeats span residues 87-121 (TVIDFNRLFSAIAKTKQYELVLALCKQMESKGIAH), 122-156 (SIYTLSIMINCFCRCRKLSYAFSTMGKIMKLGYEP), 157-191 (DTVIFNTLLNGLCLECRVSEALELVDRMVEMGHKP), 192-226 (TLITLNTLVNGLCLNGKVSDAVVLIDRMVETGFQP), 227-261 (NEVTYGPVLNVMCKSGQTALAMELLRKMEERNIKL), 262-296 (DAVKYSIIIDGLCKDGSLDNAFNLFNEMEIKGFKA), 297-331 (DIITYNTLIGGFCNAGRWDDGAKLLRDMIKRKISP), 332-366 (NVVTFSVLIDSFVKEGKLREADQLLKEMMQRGIAP), 367-401 (NTITYNSLIDGFCKENRLEEAIQMVDLMISKGCDP), 402-436 (DIMTFNILINGYCKANRIDDGLELFREMSLRGVIA), 437-471 (NTVTYNTLVQGFCQSGKLEVAKKLFQEMVSRRVRP), 472-506 (DIVSYKILLDGLCDNGELEKALEIFGKIEKSKMEL), 507-541 (DIGIYMIIIHGMCNASKVDDAWDLFCSLPLKGVKL), 542-576 (DARAYNIMISELCRKDSLSKADILFRKMTEEGHAP), and 577-611 (DELTYNILIRAHLGDDDATTAAELIEEMKSSGFPA).

Belongs to the PPR family. P subfamily.

It localises to the mitochondrion. In Arabidopsis thaliana (Mouse-ear cress), this protein is Pentatricopeptide repeat-containing protein At1g12775, mitochondrial.